We begin with the raw amino-acid sequence, 420 residues long: Gamma-glutamyl phosphate reductase (420 aa).

Belongs to the gamma-glutamyl phosphate reductase family.

The protein resides in the cytoplasm. It catalyses the reaction L-glutamate 5-semialdehyde + phosphate + NADP(+) = L-glutamyl 5-phosphate + NADPH + H(+). It participates in amino-acid biosynthesis; L-proline biosynthesis; L-glutamate 5-semialdehyde from L-glutamate: step 2/2. Its function is as follows. Catalyzes the NADPH-dependent reduction of L-glutamate 5-phosphate into L-glutamate 5-semialdehyde and phosphate. The product spontaneously undergoes cyclization to form 1-pyrroline-5-carboxylate. This is Gamma-glutamyl phosphate reductase from Alkalilimnicola ehrlichii (strain ATCC BAA-1101 / DSM 17681 / MLHE-1).